The primary structure comprises 353 residues: DNA polymerase IV (353 aa).

The 185-residue stretch at 14–198 folds into the UmuC domain; it reads IIHIDMDAFF…MDISKFHGVG (185 aa). Mg(2+) is bound by residues Asp18 and Asp116. Glu117 is a catalytic residue.

This sequence belongs to the DNA polymerase type-Y family. Monomer. Mg(2+) serves as cofactor.

It is found in the cytoplasm. It carries out the reaction DNA(n) + a 2'-deoxyribonucleoside 5'-triphosphate = DNA(n+1) + diphosphate. Its function is as follows. Poorly processive, error-prone DNA polymerase involved in untargeted mutagenesis. Copies undamaged DNA at stalled replication forks, which arise in vivo from mismatched or misaligned primer ends. These misaligned primers can be extended by PolIV. Exhibits no 3'-5' exonuclease (proofreading) activity. May be involved in translesional synthesis, in conjunction with the beta clamp from PolIII. In Streptococcus pneumoniae serotype 4 (strain ATCC BAA-334 / TIGR4), this protein is DNA polymerase IV.